A 103-amino-acid polypeptide reads, in one-letter code: UPF0145 protein BLi01945/BL05168 (103 aa).

The protein belongs to the UPF0145 family.

In Bacillus licheniformis (strain ATCC 14580 / DSM 13 / JCM 2505 / CCUG 7422 / NBRC 12200 / NCIMB 9375 / NCTC 10341 / NRRL NRS-1264 / Gibson 46), this protein is UPF0145 protein BLi01945/BL05168.